The primary structure comprises 137 residues: Small ribosomal subunit protein uS12 (137 aa).

2 disordered regions span residues 1 to 21 and 36 to 57; these read MPTI…KSDS and TKLS…TPKK. The residue at position 102 (Asp-102) is a 3-methylthioaspartic acid.

The protein belongs to the universal ribosomal protein uS12 family. As to quaternary structure, part of the 30S ribosomal subunit. Contacts proteins S8 and S17. May interact with IF1 in the 30S initiation complex.

In terms of biological role, with S4 and S5 plays an important role in translational accuracy. Its function is as follows. Interacts with and stabilizes bases of the 16S rRNA that are involved in tRNA selection in the A site and with the mRNA backbone. Located at the interface of the 30S and 50S subunits, it traverses the body of the 30S subunit contacting proteins on the other side and probably holding the rRNA structure together. The combined cluster of proteins S8, S12 and S17 appears to hold together the shoulder and platform of the 30S subunit. The chain is Small ribosomal subunit protein uS12 from Streptococcus agalactiae serotype Ia (strain ATCC 27591 / A909 / CDC SS700).